Here is a 122-residue protein sequence, read N- to C-terminus: Small ribosomal subunit protein uS12cz/uS12cy (122 aa).

Belongs to the universal ribosomal protein uS12 family. As to quaternary structure, part of the 30S ribosomal subunit.

The protein localises to the plastid. The protein resides in the chloroplast. With S4 and S5 plays an important role in translational accuracy. Located at the interface of the 30S and 50S subunits. This is Small ribosomal subunit protein uS12cz/uS12cy (rps12-A) from Triticum aestivum (Wheat).